A 178-amino-acid chain; its full sequence is Large ribosomal subunit protein uL6 (178 aa).

The protein belongs to the universal ribosomal protein uL6 family. In terms of assembly, part of the 50S ribosomal subunit.

Its function is as follows. This protein binds to the 23S rRNA, and is important in its secondary structure. It is located near the subunit interface in the base of the L7/L12 stalk, and near the tRNA binding site of the peptidyltransferase center. The chain is Large ribosomal subunit protein uL6 from Staphylococcus saprophyticus subsp. saprophyticus (strain ATCC 15305 / DSM 20229 / NCIMB 8711 / NCTC 7292 / S-41).